Here is a 367-residue protein sequence, read N- to C-terminus: DNA replication and repair protein RecF (367 aa).

Residue Gly30–Thr37 participates in ATP binding.

This sequence belongs to the RecF family.

It localises to the cytoplasm. Functionally, the RecF protein is involved in DNA metabolism; it is required for DNA replication and normal SOS inducibility. RecF binds preferentially to single-stranded, linear DNA. It also seems to bind ATP. The polypeptide is DNA replication and repair protein RecF (Clostridium beijerinckii (strain ATCC 51743 / NCIMB 8052) (Clostridium acetobutylicum)).